Consider the following 422-residue polypeptide: CRISPR-associated endodeoxyribonuclease Cas12f1 (422 aa).

The interval methionine 1–aspartate 126 is recognition domain (REC). A wedge domain (WED) region spans residues leucine 127–proline 211. Positions glutamine 212 to lysine 220 are linker. Residues isoleucine 221–glutamine 370 are ruvC-I. Residues aspartate 225 and glutamate 324 contribute to the active site. Residues arginine 371 to asparagine 399 are target nucleic acid-binding (TNB). 4 residues coordinate Zn(2+): cysteine 372, cysteine 375, cysteine 391, and cysteine 394. The segment at alanine 400–serine 420 is ruvC-II. Residue aspartate 401 is part of the active site.

The protein belongs to the CRISPR-associated endonuclease Cas12f family. As to quaternary structure, an asymmetric homodimer. Guide RNA is probably required for dimerization. Mg(2+) is required as a cofactor. Zn(2+) serves as cofactor.

CRISPR (clustered regularly interspaced short palindromic repeat), is an adaptive immune system that provides protection against mobile genetic elements (viruses, transposable elements and conjugative plasmids). CRISPR clusters contain sequences complementary to antecedent mobile elements and target invading nucleic acids. CRISPR clusters are transcribed and processed into CRISPR RNA (crRNA), which requires a trans-encoded small RNA (tracrRNA), but not this protein. Recognizes a short motif in the CRISPR repeat sequences (the 5' PAM or protospacer adjacent motif, YTT in this organism) to help distinguish self versus nonself, as targets within the CRISPR locus do not have PAMs. Has dsDNA endonuclease activity upon expression in E.coli of this protein, a mini CRISPR array and the probable tracrRNA. Plasmid cleavage is centered around positions 19-24 base pairs 3' of PAM. The mini system protects E.coli against transformation by foreign plasmids. The protein is CRISPR-associated endodeoxyribonuclease Cas12f1 of Sulfoacidibacillus thermotolerans (Acidibacillus sulfuroxidans).